The following is a 181-amino-acid chain: Translationally-controlled tumor protein homolog (181 aa).

Positions 1–181 (MLIYKDIFTD…VKEAIIEEKC (181 aa)) constitute a TCTP domain.

Belongs to the TCTP family.

The protein localises to the cytoplasm. Its function is as follows. Involved in calcium binding and microtubule stabilization. This is Translationally-controlled tumor protein homolog (tct-1) from Caenorhabditis elegans.